The following is a 297-amino-acid chain: Thoeris protein ThsA (297 aa).

2 consecutive transmembrane segments (helical) span residues 32 to 52 and 57 to 77; these read ALSI…FLDL and RLII…VQFI.

It is found in the cell membrane. With respect to regulation, activated by a signal molecule generated by ThsB. Its function is as follows. Probable membrane protein component of the Thoeris antiviral defense system, composed of ThsA and ThsB. Expression of ThsA and ThsB in B.subtilis (strain BEST7003) confers resistance to phages SBSphiC, SBSphiJ and SPO1. Activation by a signal generated by ThsB leads to phage resistance. The protein is Thoeris protein ThsA of Bacillus amyloliquefaciens (strain Y2) (Bacillus amyloliquefaciens subsp. plantarum (strain B9601-Y2)).